A 101-amino-acid chain; its full sequence is Small ribosomal subunit protein bS18c (101 aa).

This sequence belongs to the bacterial ribosomal protein bS18 family. Part of the 30S ribosomal subunit.

The protein localises to the plastid. The protein resides in the chloroplast. The chain is Small ribosomal subunit protein bS18c from Guizotia abyssinica (Niger).